The following is a 905-amino-acid chain: Core protein VP3 (905 aa).

It belongs to the orbivirus VP3 family.

It is found in the virion. In terms of biological role, the VP3 protein is one of the five proteins (with VP1, VP4, VP6 and VP7) which form the inner capsid of the virus. This chain is Core protein VP3 (Segment-3), found in African horse sickness virus 6 (AHSV-6).